The sequence spans 481 residues: uncharacterized protein (481 aa).

It belongs to the UbiD family.

This is an uncharacterized protein from Archaeoglobus fulgidus (strain ATCC 49558 / DSM 4304 / JCM 9628 / NBRC 100126 / VC-16).